A 262-amino-acid polypeptide reads, in one-letter code: Ninja-family protein 3 (262 aa).

Positions 48–69 (RRNSLTCNTSKEAAGQSPEEMN) are disordered.

It belongs to the Ninja family.

It is found in the nucleus. The chain is Ninja-family protein 3 from Zea mays (Maize).